A 241-amino-acid chain; its full sequence is Ribonuclease PH (241 aa).

Residues Arg87 and 125 to 127 (GTR) contribute to the phosphate site.

This sequence belongs to the RNase PH family. In terms of assembly, homohexameric ring arranged as a trimer of dimers.

The catalysed reaction is tRNA(n+1) + phosphate = tRNA(n) + a ribonucleoside 5'-diphosphate. In terms of biological role, phosphorolytic 3'-5' exoribonuclease that plays an important role in tRNA 3'-end maturation. Removes nucleotide residues following the 3'-CCA terminus of tRNAs; can also add nucleotides to the ends of RNA molecules by using nucleoside diphosphates as substrates, but this may not be physiologically important. Probably plays a role in initiation of 16S rRNA degradation (leading to ribosome degradation) during starvation. The polypeptide is Ribonuclease PH (Nitrosomonas europaea (strain ATCC 19718 / CIP 103999 / KCTC 2705 / NBRC 14298)).